The chain runs to 288 residues: Transformer-2 protein homolog beta (288 aa).

2 disordered regions span residues methionine 1 to proline 114 and threonine 196 to glycine 225. An N-acetylserine modification is found at serine 2. 3 positions are modified to phosphoserine: serine 2, serine 4, and serine 14. Residues alanine 17–lysine 28 are compositionally biased toward low complexity. Position 29 is a phosphoserine (serine 29). A Phosphothreonine modification is found at threonine 33. Residues arginine 59–glycine 109 show a composition bias toward basic residues. Residues serine 83, serine 85, serine 87, serine 95, serine 97, and serine 99 each carry the phosphoserine modification. Threonine 103 carries the post-translational modification Phosphothreonine. The RRM domain maps to cysteine 118–threonine 196. Positions phenylalanine 193–tyrosine 230 are linker. Lysine 197 participates in a covalent cross-link: Glycyl lysine isopeptide (Lys-Gly) (interchain with G-Cter in SUMO2). Phosphothreonine occurs at positions 201 and 203. Phosphoserine occurs at positions 215 and 237. Arginine 241 is subject to Asymmetric dimethylarginine; alternate. At arginine 241 the chain carries Dimethylated arginine; alternate. Arginine 241 carries the omega-N-methylarginine; alternate modification. The disordered stretch occupies residues glycine 242–tyrosine 288. The span at tyrosine 274–tyrosine 288 shows a compositional bias: basic residues.

It belongs to the splicing factor SR family. Found in a pre-mRNA exonic splicing enhancer (ESE) complex with TRA2B/SFRS10, SNRNP70, SNRPA1 and SRRM1. Binds to A3 enhancer proteins SFRS4, SFRS5, SFRS6 and SFRS9. Interacts with CPSF6, RBMY1A1, RBMX, RNPS1 and phosphorylated SFRS13A. Interacts with SAFB/SAFB1. Interacts with ILDR1 (via C-terminus) and ILDR2. Post-translationally, phosphorylated in the RS domains.

Its subcellular location is the nucleus. Sequence-specific RNA-binding protein which participates in the control of pre-mRNA splicing. Can either activate or suppress exon inclusion. Acts additively with RBMX to promote exon 7 inclusion of the survival motor neuron SMN2. Activates the splicing of MAPT/Tau exon 10. Alters pre-mRNA splicing patterns by antagonizing the effects of splicing regulators, like RBMX. Binds to the AG-rich SE2 domain in the SMN exon 7 RNA. Binds to pre-mRNA. This is Transformer-2 protein homolog beta (TRA2B) from Bos taurus (Bovine).